The sequence spans 87 residues: Dynein light chain 1, cytoplasmic (87 aa).

The protein belongs to the dynein light chain family. Homodimer. Cytoplasmic dynein consists of two catalytic heavy chains (HCs) and a number of non-catalytic subunits which present intermediate chains (ICs), light intermediate chains (LICs) and light chains (LCs). Component of the nuclear pore complex (NPC). NPC constitutes the exclusive means of nucleocytoplasmic transport. NPCs allow the passive diffusion of ions and small molecules and the active, nuclear transport receptor-mediated bidirectional transport of macromolecules such as proteins, RNAs, ribonucleoparticles (RNPs), and ribosomal subunits across the nuclear envelope. Due to its 8-fold rotational symmetry, all subunits are present with 8 copies or multiples thereof.

It localises to the cytoplasm. Its subcellular location is the cytoskeleton. It is found in the nucleus. The protein localises to the nuclear pore complex. Acts as one of several non-catalytic accessory components of the cytoplasmic dynein complex that are thought to be involved in linking dynein to cargos and to adapter proteins that regulate dynein function. Cytoplasmic dynein 1 acts as a motor for the intracellular retrograde motility of vesicles and organelles along microtubules. May play a role in changing or maintaining the spatial distribution of cytoskeletal structures. Also a component of the nuclear pore complex. This Kluyveromyces lactis (strain ATCC 8585 / CBS 2359 / DSM 70799 / NBRC 1267 / NRRL Y-1140 / WM37) (Yeast) protein is Dynein light chain 1, cytoplasmic (DYN2).